A 298-amino-acid chain; its full sequence is Cyclin-C (298 aa).

The 117-residue stretch at 46 to 162 (NFITAVATEC…ILDCCLVVHH (117 aa)) folds into the Cyclin N-terminal domain. Positions 278 to 298 (KLPKPNTPIPPPQQQQSSYHM) are disordered.

Belongs to the cyclin family. Cyclin C subfamily. In terms of assembly, component of the Mediator complex.

It localises to the nucleus. Functionally, component of the Mediator complex, a coactivator involved in regulated gene transcription of nearly all RNA polymerase II-dependent genes. Mediator functions as a bridge to convey information from gene-specific regulatory proteins to the basal RNA polymerase II transcription machinery. Mediator is recruited to promoters by direct interactions with regulatory proteins and serves as a scaffold for the assembly of a functional preinitiation complex with RNA polymerase II and the general transcription factors. Binds to and activates cyclin-dependent kinase cdk-8 that phosphorylates the CTD (C-terminal domain) of the large subunit of RNA polymerase II (RNAp II), which may inhibit the formation of a transcription initiation complex. The polypeptide is Cyclin-C (cic-1) (Caenorhabditis briggsae).